The sequence spans 263 residues: NADH dehydrogenase [ubiquinone] iron-sulfur protein 3, mitochondrial (263 aa).

Residues 1–35 constitute a mitochondrion transit peptide; the sequence is MAAAAARVWCRGLLGAASVGRGAGRPSVLWQHVRR.

Belongs to the complex I 30 kDa subunit family. As to quaternary structure, core subunit of respiratory chain NADH dehydrogenase (Complex I) which is composed of 45 different subunits. Interacts with NDUFAF3. Interacts with RAB5IF. Found in subcomplexes containing subunits NDUFS2, MT-ND1 and NDUFA13.

The protein localises to the mitochondrion inner membrane. The catalysed reaction is a ubiquinone + NADH + 5 H(+)(in) = a ubiquinol + NAD(+) + 4 H(+)(out). In terms of biological role, core subunit of the mitochondrial membrane respiratory chain NADH dehydrogenase (Complex I) which catalyzes electron transfer from NADH through the respiratory chain, using ubiquinone as an electron acceptor. Essential for the catalytic activity and assembly of complex I. This chain is NADH dehydrogenase [ubiquinone] iron-sulfur protein 3, mitochondrial (Ndufs3), found in Mus musculus (Mouse).